The following is a 271-amino-acid chain: Ribosomal RNA small subunit methyltransferase A (271 aa).

His-11, Leu-13, Gly-38, Glu-58, Asp-86, and Asn-101 together coordinate S-adenosyl-L-methionine.

The protein belongs to the class I-like SAM-binding methyltransferase superfamily. rRNA adenine N(6)-methyltransferase family. RsmA subfamily.

It localises to the cytoplasm. It catalyses the reaction adenosine(1518)/adenosine(1519) in 16S rRNA + 4 S-adenosyl-L-methionine = N(6)-dimethyladenosine(1518)/N(6)-dimethyladenosine(1519) in 16S rRNA + 4 S-adenosyl-L-homocysteine + 4 H(+). Functionally, specifically dimethylates two adjacent adenosines (A1518 and A1519) in the loop of a conserved hairpin near the 3'-end of 16S rRNA in the 30S particle. May play a critical role in biogenesis of 30S subunits. This chain is Ribosomal RNA small subunit methyltransferase A, found in Helicobacter pylori (strain J99 / ATCC 700824) (Campylobacter pylori J99).